An 83-amino-acid polypeptide reads, in one-letter code: MARVTVEDCLDNVDNRFQLVMVATQRSRQLARGSRDAQLPWENDKPTVMALREIAAGLVDRSILNEAVEPPAAKPRPEREFND.

Belongs to the RNA polymerase subunit omega family. As to quaternary structure, the RNAP catalytic core consists of 2 alpha, 1 beta, 1 beta' and 1 omega subunit. When a sigma factor is associated with the core the holoenzyme is formed, which can initiate transcription.

It catalyses the reaction RNA(n) + a ribonucleoside 5'-triphosphate = RNA(n+1) + diphosphate. Its function is as follows. Promotes RNA polymerase assembly. Latches the N- and C-terminal regions of the beta' subunit thereby facilitating its interaction with the beta and alpha subunits. The chain is DNA-directed RNA polymerase subunit omega from Chromohalobacter salexigens (strain ATCC BAA-138 / DSM 3043 / CIP 106854 / NCIMB 13768 / 1H11).